A 794-amino-acid chain; its full sequence is Copper-exporting P-type ATPase (794 aa).

2 HMA domains span residues 5 to 70 and 72 to 138; these read KKTT…YGVL and ETAE…YDAQ. The Cu(+) site is built by Cys-16, Cys-19, Cys-83, and Cys-86. 6 consecutive transmembrane segments (helical) span residues 162-182, 187-207, 224-244, 250-270, 411-431, and 438-458; these read IISAVLAAPLLLTMLVHLFGI, IFMNPWFQFILATPVQFIIGW, MDVLVALGTSAAYFYSLYEMV, ANVMPHLYFETSAVLITLILF, YFVPIVVGIAVLTFIIWIAFV, and PALVAAIAVLVIACPCALGLA. Asp-495 functions as the 4-aspartylphosphate intermediate in the catalytic mechanism. Mg(2+) contacts are provided by Asp-689 and Asp-693. 2 helical membrane-spanning segments follow: residues 747–766 and 770–789; these read LFWAFGYNVAGIPIAALGLL and IAGAAMALSSVSVVTNALRL.

The protein belongs to the cation transport ATPase (P-type) (TC 3.A.3) family. Type IB subfamily.

The protein localises to the cell membrane. The catalysed reaction is Cu(+)(in) + ATP + H2O = Cu(+)(out) + ADP + phosphate + H(+). Functionally, involved in copper export. This is Copper-exporting P-type ATPase (copA) from Staphylococcus saprophyticus subsp. saprophyticus (strain ATCC 15305 / DSM 20229 / NCIMB 8711 / NCTC 7292 / S-41).